Consider the following 313-residue polypeptide: UDP-N-acetylenolpyruvoylglucosamine reductase (313 aa).

An FAD-binding PCMH-type domain is found at 31–207; it reads VGGPADALVA…TGVDLGLGFD (177 aa). The active site involves Arg-180. Residue Cys-236 is the Proton donor of the active site. Glu-307 is an active-site residue.

This sequence belongs to the MurB family. The cofactor is FAD.

The protein resides in the cytoplasm. It carries out the reaction UDP-N-acetyl-alpha-D-muramate + NADP(+) = UDP-N-acetyl-3-O-(1-carboxyvinyl)-alpha-D-glucosamine + NADPH + H(+). It participates in cell wall biogenesis; peptidoglycan biosynthesis. Its function is as follows. Cell wall formation. The chain is UDP-N-acetylenolpyruvoylglucosamine reductase from Desulfosudis oleivorans (strain DSM 6200 / JCM 39069 / Hxd3) (Desulfococcus oleovorans).